The sequence spans 581 residues: MGFDYALVHLKYTIPPAVLLTLLYRPLLTKIDVYKVAFLVTIAVVATIPWDSYLIRNRIWSYPDHVIIGPTLFDIPLEEVFFFVVQTYNTSLLYLVLSKPTFQPVYLCTERDELHGSWRLKRLIGQAILLGAIAWGWFCVRERGLGTYTGLILIWAGPFLLLLWSLAYQFIIGLPFTNTLLPIVLPTLYLWIVDTLALRRGTWVISPGTKFGVHLWDGLEIEEALFFLLTNVLIVFGQLAFDNALAVLYAFPHLFPDPSLLPSPATLIRSLLTSCAQYDEARLTGFREAVSRLKRKSRSFYLASSTFQGPLRMDLLLLYSFCRVADDLVDNAATTEEARQWIAKLHKFLDNVYRKDVVCSSVTDQVRKEFPLDTHSALLQLPCCKLSAEPLRDLLRGFEMDLEFNSTSPIQSTEDLVLYSERVAGTVAQMCIQLIFHLYPSSLTAEKRHKVVAAGNSMGVALQYVNIARDIGVDAKIGRVYLPTDWLSEVGLNCDTVLKDPKDPRIEALRGRLLDDAFSFYEEAKLAIAQLPIEAQGPIRVAVESYMEIGRTLKQDGFIVKAGRATVPKWRRVLVAWRTLN.

Residues 1–243 (MGFDYALVHL…IVFGQLAFDN (243 aa)) are lycopene beta-cyclase. The next 7 helical transmembrane spans lie at 3-23 (FDYA…LTLL), 35-55 (KVAF…SYLI), 65-85 (HVII…FFVV), 120-140 (LKRL…WFCV), 152-172 (ILIW…QFII), 173-193 (GLPF…LWIV), and 221-241 (IEEA…QLAF). A phytoene synthase region spans residues 250–581 (AFPHLFPDPS…RVLVAWRTLN (332 aa)).

In the N-terminal section; belongs to the lycopene beta-cyclase family. The protein in the C-terminal section; belongs to the phytoene/squalene synthase family.

The protein resides in the membrane. It catalyses the reaction all-trans-lycopene = gamma-carotene. It carries out the reaction gamma-carotene = all-trans-beta-carotene. The catalysed reaction is 2 (2E,6E,10E)-geranylgeranyl diphosphate = 15-cis-phytoene + 2 diphosphate. The protein operates within carotenoid biosynthesis; beta-carotene biosynthesis. It functions in the pathway carotenoid biosynthesis; phytoene biosynthesis; all-trans-phytoene from geranylgeranyl diphosphate: step 1/1. Its function is as follows. Bifunctional enzyme that catalyzes the reactions from geranylgeranyl diphosphate to phytoene (phytoene synthase) and lycopene to beta-carotene via the intermediate gamma-carotene (lycopene cyclase). This is Bifunctional lycopene cyclase/phytoene synthase from Leptosphaeria maculans (strain JN3 / isolate v23.1.3 / race Av1-4-5-6-7-8) (Blackleg fungus).